The sequence spans 171 residues: S-ribosylhomocysteine lyase (171 aa).

Residues His54, His58, and Cys128 each contribute to the Fe cation site.

This sequence belongs to the LuxS family. Homodimer. It depends on Fe cation as a cofactor.

It catalyses the reaction S-(5-deoxy-D-ribos-5-yl)-L-homocysteine = (S)-4,5-dihydroxypentane-2,3-dione + L-homocysteine. Functionally, involved in the synthesis of autoinducer 2 (AI-2) which is secreted by bacteria and is used to communicate both the cell density and the metabolic potential of the environment. The regulation of gene expression in response to changes in cell density is called quorum sensing. Catalyzes the transformation of S-ribosylhomocysteine (RHC) to homocysteine (HC) and 4,5-dihydroxy-2,3-pentadione (DPD). In Campylobacter concisus (strain 13826), this protein is S-ribosylhomocysteine lyase.